The sequence spans 239 residues: DNA repair protein RecO (239 aa).

This sequence belongs to the RecO family.

In terms of biological role, involved in DNA repair and RecF pathway recombination. This chain is DNA repair protein RecO, found in Bifidobacterium longum (strain DJO10A).